A 92-amino-acid polypeptide reads, in one-letter code: Phosphoribosyl-ATP pyrophosphatase (92 aa).

Belongs to the PRA-PH family.

The protein resides in the cytoplasm. The enzyme catalyses 1-(5-phospho-beta-D-ribosyl)-ATP + H2O = 1-(5-phospho-beta-D-ribosyl)-5'-AMP + diphosphate + H(+). It functions in the pathway amino-acid biosynthesis; L-histidine biosynthesis; L-histidine from 5-phospho-alpha-D-ribose 1-diphosphate: step 2/9. The chain is Phosphoribosyl-ATP pyrophosphatase from Leptospira interrogans serogroup Icterohaemorrhagiae serovar copenhageni (strain Fiocruz L1-130).